The chain runs to 182 residues: NADH-quinone oxidoreductase subunit I (182 aa).

4Fe-4S ferredoxin-type domains are found at residues 52–82 (LTRD…LQKA) and 92–121 (DFFR…LTPD). The [4Fe-4S] cluster site is built by Cys-62, Cys-65, Cys-68, Cys-72, Cys-101, Cys-104, Cys-107, and Cys-111.

It belongs to the complex I 23 kDa subunit family. NDH-1 is composed of 13 different subunits. Subunits NuoA, H, J, K, L, M, N constitute the membrane sector of the complex. [4Fe-4S] cluster serves as cofactor.

The protein resides in the cell inner membrane. It carries out the reaction a quinone + NADH + 5 H(+)(in) = a quinol + NAD(+) + 4 H(+)(out). In terms of biological role, NDH-1 shuttles electrons from NADH, via FMN and iron-sulfur (Fe-S) centers, to quinones in the respiratory chain. The immediate electron acceptor for the enzyme in this species is believed to be ubiquinone. Couples the redox reaction to proton translocation (for every two electrons transferred, four hydrogen ions are translocated across the cytoplasmic membrane), and thus conserves the redox energy in a proton gradient. This is NADH-quinone oxidoreductase subunit I from Pseudomonas syringae pv. tomato (strain ATCC BAA-871 / DC3000).